A 422-amino-acid polypeptide reads, in one-letter code: 4-hydroxy-3-methylbut-2-en-1-yl diphosphate synthase (flavodoxin) (422 aa).

Residues cysteine 316, cysteine 319, cysteine 362, and glutamate 369 each coordinate [4Fe-4S] cluster.

Belongs to the IspG family. Requires [4Fe-4S] cluster as cofactor.

It carries out the reaction (2E)-4-hydroxy-3-methylbut-2-enyl diphosphate + oxidized [flavodoxin] + H2O + 2 H(+) = 2-C-methyl-D-erythritol 2,4-cyclic diphosphate + reduced [flavodoxin]. It functions in the pathway isoprenoid biosynthesis; isopentenyl diphosphate biosynthesis via DXP pathway; isopentenyl diphosphate from 1-deoxy-D-xylulose 5-phosphate: step 5/6. Its function is as follows. Converts 2C-methyl-D-erythritol 2,4-cyclodiphosphate (ME-2,4cPP) into 1-hydroxy-2-methyl-2-(E)-butenyl 4-diphosphate. The protein is 4-hydroxy-3-methylbut-2-en-1-yl diphosphate synthase (flavodoxin) of Ehrlichia ruminantium (strain Welgevonden).